The chain runs to 315 residues: Fucose-specific lectin (315 aa).

Repeat copies occupy residues 2-53, 54-103, 104-155, 156-207, 208-260, and 261-315. The interval 2–315 is 6 X approximate tandem repeats; it reads STPGAQQVLF…QLGRSALPPA (314 aa). Alpha-L-fucose contacts are provided by Arg25, Glu37, Trp44, Arg73, Glu85, Trp94, Gly98, Arg126, Glu138, Trp146, Thr150, Arg177, Gln189, Trp198, Arg230, and Gln242. Positions 244, 246, and 252 each coordinate Zn(2+). Residues Arg282 and Glu296 each coordinate alpha-L-fucose.

The protein belongs to the fungal fucose-specific lectin family. In terms of assembly, homodimer.

Multispecific lectin that is able to recognize L-fucose in all possible linkages. These could be found not only in decomposed plant matter in soil, which is the natural environment for A.fumigatus, but also in various epitopes on human tissues. Mediates binding of A.fumigatus conidia to airway mucin in a fucose dependent manner. Stimulates IL-8 production by human bronchial cells in a dose-dependent manner, contributing to the inflammatory response observed upon the exposure of a patient to A.fumigatus, and thus might be an important virulence factor involved in an early stage of A.fumigatus infection. This Aspergillus fumigatus (strain ATCC MYA-4609 / CBS 101355 / FGSC A1100 / Af293) (Neosartorya fumigata) protein is Fucose-specific lectin.